The following is a 555-amino-acid chain: Inositol 1,4,5-triphosphate receptor associated 2 (555 aa).

Residues 1 to 495 (MESTPFSGVA…LKSSIRKANK (495 aa)) lie on the Cytoplasmic side of the membrane. 2 disordered regions span residues 84 to 103 (SLPL…SSDP) and 128 to 147 (RSAS…DNIA). Thr-91 is subject to Phosphothreonine. Residues 91 to 102 (TSSTDGTITSSD) show a composition bias toward low complexity. A compositionally biased stretch (polar residues) spans 129–142 (SASPTIEAQGTSPA). Residues 227 to 341 (TLEKRVKLEE…LEELKQVLLQ (115 aa)) are a coiled coil. Ser-363, Ser-370, and Ser-424 each carry phosphoserine. The tract at residues 437–469 (ELKTKDDSEPSGEETVERTRKPSLSEKKNNPSK) is disordered. The segment covering 451–465 (TVERTRKPSLSEKKN) has biased composition (basic and acidic residues). The chain crosses the membrane as a helical; Anchor for type IV membrane protein span at residues 496-516 (ALWLSIAFIVLFAALMSFLTG). Residues 517–555 (QLFQKSVDAAPTQQEDSWTSLEHILWPFTRLRHNGPPPV) lie on the Lumenal side of the membrane.

The protein belongs to the IRAG2 family. Interacts (via coiled-coil domain) with ITPR3. Interacts with SUN1 and SUN2. Interacts with microtubules. Interacts with HCN4; regulates HCN4 channel activity. The removal of the C-terminal lumenal domain occurs by proteolytic processing. As to expression, expressed at high levels in pre B-cells, mature B-cells and pre T-cells. Expressed at low levels in mature T-cells and plasma B-cells. Expressed in germinal center B-cells, splenic marginal zone cells and B-cell lymphomas. Expressed in neuronal cells in the cerebral cortex, epithelial cells in tonsil, adrenal glands, zymogen-producing cells in the stomach and epithelial cells in seminal vesicles.

The protein resides in the cytoplasm. It localises to the endoplasmic reticulum membrane. Its subcellular location is the nucleus envelope. The protein localises to the cytoskeleton. It is found in the microtubule organizing center. The protein resides in the centrosome. It localises to the spindle pole. Its subcellular location is the chromosome. Functionally, plays a role in the delivery of peptides to major histocompatibility complex (MHC) class I molecules; this occurs in a transporter associated with antigen processing (TAP)-independent manner. May play a role in taste signal transduction via ITPR3. May play a role during fertilization in pronucleus congression and fusion. Plays a role in maintaining nuclear shape, maybe as a component of the LINC complex and through interaction with microtubules. Plays a role in the regulation of cellular excitability by regulating the hyperpolarization-activated cyclic nucleotide-gated HCN4 channel activity. The protein is Inositol 1,4,5-triphosphate receptor associated 2 of Homo sapiens (Human).